Consider the following 256-residue polypeptide: Zinc import ATP-binding protein ZnuC 1 (256 aa).

The 216-residue stretch at 5 to 220 (LTLQDVCVVF…PKYIALFGQQ (216 aa)) folds into the ABC transporter domain. 37 to 44 (GPNGAGKS) contacts ATP. Residues 232–256 (HHHNHDLSGEPSDGSCCSKNKKAHQ) form a disordered region.

This sequence belongs to the ABC transporter superfamily. Zinc importer (TC 3.A.1.15.5) family. The complex is composed of two ATP-binding proteins (ZnuC), two transmembrane proteins (ZnuB) and a solute-binding protein (ZnuA).

It is found in the cell inner membrane. The enzyme catalyses Zn(2+)(out) + ATP(in) + H2O(in) = Zn(2+)(in) + ADP(in) + phosphate(in) + H(+)(in). Part of the ABC transporter complex ZnuABC involved in zinc import. Responsible for energy coupling to the transport system. The polypeptide is Zinc import ATP-binding protein ZnuC 1 (Aliivibrio fischeri (strain ATCC 700601 / ES114) (Vibrio fischeri)).